Reading from the N-terminus, the 406-residue chain is MAAKIIGGCCSWRRFYRKRTSSRFLIFSVRASSSMDDMDTVYKQLGLFSLKKKIKDVVLKAEMFAPDALELEEEQWIKQEETMRYFDLWDDPAKSDEILLKLADRAKAVDSLKDLKYKAEEAKLIIQLGEMDAIDYSLFEQAYDSSLDVSRSLHHYEMSKLLRDQYDAEGACMIIKSGSPGAKSQIWTEQVVSMYIKWAERLGQNARVAEKCSLLSNKSGVSSATIEFEFEFAYGYLLGERGVHRLIISSTSNEECSATVDIIPLFLRASPDFEVKEGDLIVSYPAKEDHKIAENMVCIHHIPSGVTLQSSGERNRFANRIKALNRLKAKLLVIAKEQKVSDVNKIDSKNILEPREETRSYVSKGHKMVVDRKTGLEILDLKSVLDGNIGPLLGAHISMRRSIDAI.

It belongs to the prokaryotic/mitochondrial release factor family. As to quaternary structure, interacts with PDE338.

It localises to the plastid. Its subcellular location is the chloroplast stroma. The protein resides in the chloroplast. Functionally, involved in the light- and stress-dependent regulation of stability of 3' processed petB transcripts, thus regulating cytochrome b6 accumulation, a rate-limiting step in photosynthetic electron transport. May be recruited to specifically protect petB transcripts against 3'-5' exonucleolytic attack by masking the 3' ends. Does not function as release factor. The sequence is that of Peptide chain release factor PrfB3, chloroplastic from Arabidopsis thaliana (Mouse-ear cress).